The chain runs to 451 residues: Phenolic glucoside malonyltransferase 2 (451 aa).

The active-site Proton acceptor is His-165. Residues 165 to 169 carry the HXXXD motif motif; the sequence is HAVLD. Malonyl-CoA-binding positions include His-270 and 272-273; that span reads ST. Asp-395 acts as the Proton acceptor in catalysis. A DFGWG motif motif is present at residues 395 to 399; that stretch reads DFGWG.

This sequence belongs to the plant acyltransferase family. Phenolic glucoside malonyltransferase subfamily.

It catalyses the reaction a flavonol 7-O-beta-D-glucoside + malonyl-CoA = a flavonol 7-O-(6-O-malonyl-beta-D-glucoside) + CoA. Functionally, malonyltransferase acting on xenobiotic glucosides. Has activity toward 2-Naphthol glucoside (2NAG), 1-Naphthol glucoside (1NAG), kaempferol 7-O-glucoside, hydroxycoumarin glucosides and phenol-glucosides, but not toward kaempferol 3-O-glucoside or daidzin. Prefers phenol glucosides rather than naphtol glucosides. In vivo, seems to be involved in the malonylation of 4-methylumbelliferone glucoside or 4-nitrophenyl glucoside while PMAT1 would be involved in the malonylation of 2-Naphthol glucoside. The sequence is that of Phenolic glucoside malonyltransferase 2 (PMAT2) from Arabidopsis thaliana (Mouse-ear cress).